Here is a 956-residue protein sequence, read N- to C-terminus: MPVAPHELRDTIKSRDLGLFQCIDLLKQHNDNIGVHHQLVQKLYSYSYDELEFFIPQFIQLLVNFETDSMALEDFLLHYCNQFPHFSLIVFWYLQAFLFELRNEPKSYSFQTVRKFINKLQNILFNVETSFHIRGPEFRENMQPALILCGSVASAFSSPLVNEYALPIVRSQGKQQKSFVFKLASFQKSLTRNLTMKNQRLSADAITPVISDDDSKVSNRIQESQRLKTKYSKKKISAALQLDDSENYTTDEEELGYVQTLSRPKIREMKYTEVEENLKINTIIRSKKNRSKTTVNSISFFSDTDQSASMEEYNRSAQSLPELVRTRSRLDLYSSESEAALGTSRNSAELIISKKKFMGSEVKTRPYKELLKILQVNYSKKETSFIMSLQNISLRLSSVPKVARLSALRAELSIINESILPSEIDIPQLLPVTSNKNKKFHKILKLNINEACVLNSAERVPYLLLIEYLSDEIDFNPFSDQNQKIINDCVRKPEVKPNDQISGDDDTSVVSSIQEEMFLDNNASENYNEDGDLGEISLLHSRSSSRDWAKSTPGSPVARSSQEDEKFYGNVSSTTGGTIESSVLADQMRIASLMLQQLESSGQSNTQQFVSIRNRIIESMISLQDQFDFIDYETLKELKTDEQDAGKRKLENDFKLAEDWNEKKHRIRKSSIYGHLENWDLCSVIVKNGDDLPQEAFACQLISLISNIWKKHKVDFWTKRMKILITSANAGLVETITNAMSIHSIKKSLTELSIENGENAKGRIFTLKDYFQKLYGSVDSSKYVKAQENFAISLASYSIICYVLQIKDRHNGNIMLDHEGHIIHIDFGFLLSNSPGSVGFEAAPFKLTSEYVEVLGGLESKAYLKFVDTCKNCFKALRKEWGQIVSIVELMQKGSSLPCFNNGDNTSVLLQQRLQLHLSDEEIDSFIEVYLIEKSVGSMYTRLYDQFQMITQGIYS.

The PIK helical domain maps to 1-120 (MPVAPHELRD…QTVRKFINKL (120 aa)). The segment at 545–573 (SRDWAKSTPGSPVARSSQEDEKFYGNVSS) is disordered. Residues 658-939 (EDWNEKKHRI…YLIEKSVGSM (282 aa)) enclose the PI3K/PI4K catalytic domain. The G-loop stretch occupies residues 664 to 670 (KHRIRKS). Positions 805–813 (QIKDRHNGN) are catalytic loop. Residues 824–848 (HIDFGFLLSNSPGSVGFEAAPFKLT) are activation loop.

It belongs to the PI3/PI4-kinase family. Type III PI4K subfamily.

It is found in the nucleus. It catalyses the reaction a 1,2-diacyl-sn-glycero-3-phospho-(1D-myo-inositol) + ATP = a 1,2-diacyl-sn-glycero-3-phospho-(1D-myo-inositol 4-phosphate) + ADP + H(+). Functionally, acts on phosphatidylinositol (PI) in the first committed step in the production of the second messenger inositol 1,4,5,-trisphosphate. The chain is Phosphatidylinositol 4-kinase PIK1a (PIKA) from Candida albicans (strain SC5314 / ATCC MYA-2876) (Yeast).